Here is a 125-residue protein sequence, read N- to C-terminus: Glycine cleavage system H protein 1 (125 aa).

In terms of domain architecture, Lipoyl-binding spans 22–103 (KAYIGITDYA…PYGSWLVAVR (82 aa)). Lys-63 carries the N6-lipoyllysine modification.

This sequence belongs to the GcvH family. As to quaternary structure, the glycine cleavage system is composed of four proteins: P, T, L and H. It depends on (R)-lipoate as a cofactor.

Its function is as follows. The glycine cleavage system catalyzes the degradation of glycine. The H protein shuttles the methylamine group of glycine from the P protein to the T protein. The protein is Glycine cleavage system H protein 1 of Caldanaerobacter subterraneus subsp. tengcongensis (strain DSM 15242 / JCM 11007 / NBRC 100824 / MB4) (Thermoanaerobacter tengcongensis).